A 349-amino-acid polypeptide reads, in one-letter code: Dipeptide transport ATP-binding protein DppD (349 aa).

In terms of domain architecture, ABC transporter spans 7 to 258 (LEVKNLHVNF…PQHPYTWGLL (252 aa)). Position 43–50 (43–50 (GESGSGKS)) interacts with ATP.

The protein belongs to the ABC transporter superfamily. In terms of assembly, the complex is composed of two ATP-binding proteins (DppD and DppF), two transmembrane proteins (DppB and DppC) and a solute-binding protein (DppA).

It localises to the cell membrane. It catalyses the reaction a dipeptide(out) + ATP + H2O = a dipeptide(in) + ADP + phosphate + H(+). Its function is as follows. Part of the ABC transporter DppABCDF involved in dipeptide transport. Responsible for energy coupling to the transport system. This is Dipeptide transport ATP-binding protein DppD from Lactococcus lactis subsp. cremoris (strain MG1363).